Reading from the N-terminus, the 343-residue chain is Heat-inducible transcription repressor HrcA (343 aa).

It belongs to the HrcA family.

Negative regulator of class I heat shock genes (grpE-dnaK-dnaJ and groELS operons). Prevents heat-shock induction of these operons. This chain is Heat-inducible transcription repressor HrcA, found in Mycoplasma genitalium (strain ATCC 33530 / DSM 19775 / NCTC 10195 / G37) (Mycoplasmoides genitalium).